A 172-amino-acid chain; its full sequence is uncharacterized protein (172 aa).

Belongs to the flavoredoxin family. Requires FMN as cofactor.

This is an uncharacterized protein from Pyrococcus horikoshii (strain ATCC 700860 / DSM 12428 / JCM 9974 / NBRC 100139 / OT-3).